We begin with the raw amino-acid sequence, 390 residues long: GLH-binding kinase 1 (390 aa).

The 301-residue stretch at 38–338 (YVNLSFLNAG…VEDALNHPYV (301 aa)) folds into the Protein kinase domain. Residues 44–52 (LNAGAQGTV) and Lys67 each bind ATP. The active-site Proton acceptor is Asp164. Ser198 bears the Phosphoserine mark. Tyr200 is subject to Phosphotyrosine.

The protein belongs to the protein kinase superfamily. CMGC Ser/Thr protein kinase family. MAP kinase subfamily. As to quaternary structure, interacts with glh-1, glh-2 (via C-terminus), glh-3 (via C-terminus) and glh-4 (via C-terminus). Interacts with csn-5; the interaction may prevent glh-1 degradation induced by kgb-1. Interacts with fos-1. Mg(2+) is required as a cofactor. In terms of processing, may be phosphorylated by mek-1 on Ser-198 and/or Tyr-200. Phosphorylation is induced upon Cu(2+) and arsenite-mediated cell stimulation and by fasting. In terms of tissue distribution, expressed in somatic and germline tissues.

The protein resides in the cytoplasm. It carries out the reaction L-seryl-[protein] + ATP = O-phospho-L-seryl-[protein] + ADP + H(+). The catalysed reaction is L-threonyl-[protein] + ATP = O-phospho-L-threonyl-[protein] + ADP + H(+). Activated by mek-1 mediated phosphorylation. No differences in basal activation between larvae and adults. Inhibited by phosphatase vhp-1. Mitogen-activated protein kinase which is an essential component of the JNK pathway composed of mlk-1, mek-1 and kgb-1. Phosphorylates the transcription factor fos-1 which prevents fos-1 dimerization and promoter binding and results in activation of target genes including F53A9.2/kreg-1 and lys-3/kreg-2. Phosphorylates jun-1 and activates the AP-1 transcription factor which is a heterodimer of jun-1 and fos-1. Phosphorylates glh-1 in vitro which may play a role in controlling glh-1 protein levels in the germline by targeting it for degradation by the proteasome. Required for oogenesis and probably also for spermatogenesis. Involved in the response to environmental stress such as heavy metals, infection and protein folding stress in an age-dependent manner. In larvae, has a protective role which becomes detrimental in adults. May control susceptibility to infection, heavy metal stress and premature lethality by regulating daf-16 cellular localization. Involved in the transcriptional response to bacterial pore-forming toxins and to fasting. Required for fasting-induced longevity. Involved in axon regeneration after injury downstream of tyrosine receptor svh-2. The chain is GLH-binding kinase 1 from Caenorhabditis elegans.